The chain runs to 573 residues: Sulfite reductase [NADPH] hemoprotein beta-component (573 aa).

Positions 438, 444, 483, and 487 each coordinate [4Fe-4S] cluster. C487 contributes to the siroheme binding site.

Belongs to the nitrite and sulfite reductase 4Fe-4S domain family. Alpha(8)-beta(8). The alpha component is a flavoprotein, the beta component is a hemoprotein. Requires siroheme as cofactor. The cofactor is [4Fe-4S] cluster.

The enzyme catalyses hydrogen sulfide + 3 NADP(+) + 3 H2O = sulfite + 3 NADPH + 4 H(+). It participates in sulfur metabolism; hydrogen sulfide biosynthesis; hydrogen sulfide from sulfite (NADPH route): step 1/1. In terms of biological role, component of the sulfite reductase complex that catalyzes the 6-electron reduction of sulfite to sulfide. This is one of several activities required for the biosynthesis of L-cysteine from sulfate. The sequence is that of Sulfite reductase [NADPH] hemoprotein beta-component from Shouchella clausii (strain KSM-K16) (Alkalihalobacillus clausii).